A 676-amino-acid chain; its full sequence is UvrABC system protein C (676 aa).

In terms of domain architecture, GIY-YIG spans 16 to 95; sequence VEPGVYRFRD…IKEFDPRFNI (80 aa). Residues 208–243 enclose the UVR domain; sequence DRLVRDLERKMTAAAEDLDFERAARLRDDIGALRRA.

It belongs to the UvrC family. Interacts with UvrB in an incision complex.

The protein localises to the cytoplasm. The UvrABC repair system catalyzes the recognition and processing of DNA lesions. UvrC both incises the 5' and 3' sides of the lesion. The N-terminal half is responsible for the 3' incision and the C-terminal half is responsible for the 5' incision. This chain is UvrABC system protein C, found in Mycobacterium sp. (strain JLS).